Reading from the N-terminus, the 74-residue chain is Large ribosomal subunit protein bL31 (74 aa).

4 residues coordinate Zn(2+): Cys16, Cys18, Cys38, and Cys41.

It belongs to the bacterial ribosomal protein bL31 family. Type A subfamily. Part of the 50S ribosomal subunit. Requires Zn(2+) as cofactor.

In terms of biological role, binds the 23S rRNA. This Mycobacteroides abscessus (strain ATCC 19977 / DSM 44196 / CCUG 20993 / CIP 104536 / JCM 13569 / NCTC 13031 / TMC 1543 / L948) (Mycobacterium abscessus) protein is Large ribosomal subunit protein bL31.